The chain runs to 446 residues: Baeyer-Villiger monooxygenase dmxR6 (446 aa).

It belongs to the AflY oxidoreductase family.

It functions in the pathway secondary metabolite biosynthesis. Its function is as follows. Baeyer-Villiger monooxygenase; part of the gene cluster that mediates the biosynthesis of the dimeric xanthones cryptosporioptides. The pathway begins with the synthesis of atrochrysone thioester by the polyketide synthase dmx-nrPKS. The atrochrysone carboxyl ACP thioesterase dmxR1 then breaks the thioester bond and releases the atrochrysone carboxylic acid from dmx-nrPKS. Atrochrysone carboxylic acid is decarboxylated by the decarboxylase dmxR15, and oxidized by the anthrone oxygenase dmxR16 to yield emodin. Emodin is then reduced to emodin hydroquinone by the oxidoreductase dmxR7. A-ring reduction by the short chain dehydrogenase dmxR18, dehydration by the scytalone dehydratase-like protein dmxR17 and probable spontaneous re-oxidation, results in overall deoxygenation to chrysophanol. Baeyer-Villiger oxidation by the Baeyer-Villiger monooxygenase (BVMO) dmxR6 then yields monodictylactone in equilibrium with monodictyphenone. In the case of the cryptosporioptides biosynthesis, monodictylactone is reduced at C-12 to an alcohol (by the short chain dehydrogenases dmxR12 or dmxR8) and hydroxylated at C-5 by dmxR9, yielding the electron-rich aromatic which could eliminate H(2)O to form the ortho-quinonemethide, followed by tautomerisation to paraquinone and complete the formal reduction to produce the 10-methylgroup. Conjugate addition of C-4a-OH to the resulting paraquinone by the monooxygenase dmxR10 then gives cyclohexadienone, which is then reduced at C-5 by the short chain dehydrogenase dmxR3 to give the dihydroxanthone. The 6,7-epoxide in the cryptosporioptides could be introduced by the cytochrome P450 monooxygenase dmxL3. The highly reducing PKS dmxL2 manufactures butyrate, which is further carboxylated by dmxL1 to form ethylmalonate. It is not yet clear whether the carboxylation occurs while the butyrate is attached to the ACP of dmxL2, but this unusual fungal metabolite could then be esterified to O-5 by the O-acetyltransferase dmxR13. Finally, dimerization performed by dmxR5 gives the observed dimers cryptosporioptides A, B and C as the final products of the pathway. This Cryptosporiopsis sp. (strain 8999) protein is Baeyer-Villiger monooxygenase dmxR6.